A 290-amino-acid polypeptide reads, in one-letter code: 3-hydroxyacyl-thioester dehydratase Y (290 aa).

Residues 147–169 (FGGARGERPAAPEFPDRHPDARI) are disordered. Basic and acidic residues predominate over residues 151–169 (RGERPAAPEFPDRHPDARI). The MaoC-like domain occupies 161–271 (PDRHPDARID…AVFRTEVAGS (111 aa)).

Belongs to the enoyl-CoA hydratase/isomerase family.

It catalyses the reaction a (3R)-3-hydroxyacyl-CoA = a (2E)-enoyl-CoA + H2O. The catalysed reaction is (3R)-hydroxyhexanoyl-CoA = (2E)-hexenoyl-CoA + H2O. It carries out the reaction (2E)-octenoyl-CoA + H2O = (3R)-hydroxyoctanoyl-CoA. The enzyme catalyses (3R)-3-hydroxydecanoyl-CoA = (2E)-decenoyl-CoA + H2O. It catalyses the reaction (3R)-3-hydroxydodecanoyl-CoA = (2E)-dodecenoyl-CoA + H2O. The catalysed reaction is (3R)-hydroxyhexadecanoyl-CoA = (2E)-hexadecenoyl-CoA + H2O. Its function is as follows. Shows trans-enoyl-CoA hydratase/3-hydroxyacyl-CoA dehydratase activity. In vitro, can hydrate various enoyl-CoA such as (2E)-hexenoyl-CoA, (2E)-octenoyl-CoA, (2E)-decenoyl-CoA, (2E)-dodecenoyl-CoA and (2E)-hexadecenoyl-CoA. May contribute to the persistence of the tuberculosis infection by inducing COX-2 expression in macrophages through MAPK-NF-kappaB signaling pathway. The sequence is that of 3-hydroxyacyl-thioester dehydratase Y from Mycobacterium tuberculosis (strain ATCC 25618 / H37Rv).